The following is a 95-amino-acid chain: Large ribosomal subunit protein uL23cz/uL23cy (95 aa).

The protein belongs to the universal ribosomal protein uL23 family. In terms of assembly, part of the 50S ribosomal subunit.

The protein localises to the plastid. It localises to the chloroplast. Its function is as follows. Binds to 23S rRNA. The protein is Large ribosomal subunit protein uL23cz/uL23cy (rpl23-A) of Amborella trichopoda.